Reading from the N-terminus, the 463-residue chain is MTQHFDLIAIGGGSGGLAVAEKAAAFGKRVALIESKALGGTCVNVGCVPKKVMWYASHLAEAVRDAPGFGVQASGGTLDWPRLVAGRDRYIGAINSFWDGYVERLGITRVDGHARFVDAHTIEVEGQRLSADHIVIATGGRPIVPRLPGAELGITSDGFFALQQQPKRVAIIGAGYIGIELAGLLRSFGSEVTVVALEDRLLFQFDPLLSATLAENMHAQGIETHLEFAVAALERDAQGTTLVAQDGTRLEGFDSVIWAVGRAPNTRDLGLEAAGIEVQSNGMVPTDAYQNTNVPGVYALGDITGRDQLTPVAIAAGRRLAERLFDGQSERKLDYDNIPTVVFAHPPLSKVGLSEPEARERLGDVLTVYETSFTPMRYALNEHGPKTAMKLVCAGPEQRVVGVHVIGDGADEMLQGFAVAVKMGATKADFDNTVAIHPGSAEELVTLKEPVRRPGDPLPEGAA.

Positions 2, 3, and 4 each coordinate Ni(2+). FAD contacts are provided by residues 14 to 15, Glu-34, and Thr-41; that span reads SG. A disulfide bond links Cys-42 and Cys-47. Residues Lys-50 and 113–114 each bind FAD; that span reads HA. Lys-50 lines the NAD(+) pocket. Residues 174–180, 197–198, Val-230, and Gly-261 contribute to the NAD(+) site; these read AGYIGIE and LE. FAD is bound by residues Asp-302 and 308-310; that span reads QLT. NAD(+) is bound by residues Gln-308 and Val-341. An FAD-binding site is contributed by His-437. His-437 (proton acceptor) is an active-site residue.

This sequence belongs to the class-I pyridine nucleotide-disulfide oxidoreductase family. In terms of assembly, homodimer. FAD serves as cofactor.

It carries out the reaction 2 glutathione amide + NAD(+) = glutathione amide disulfide + NADH + H(+). Its function is as follows. Catalyzes the reduction of glutathione amide disulfide (GASSAG) to restore glutathione amide (GASH) in the presence of NADH. May play a role in GASH metabolism under anaerobic conditions as a sulfide carrier necessary for cytoplasmic sulfide oxidation. In Marichromatium gracile (Chromatium gracile), this protein is Glutathione amide reductase.